We begin with the raw amino-acid sequence, 683 residues long: MSALNSLPLPVVRLLAFFHEELSERRPGRVPQTVQLWVGCLLVILISMTFEIPFVALSLAVLFYGIQSNAFYTKFVAILFVVATVLEIGSLFLIYKWSYGEPLIRLIIAGPILMGCMFLMRTHRLGLVFFAVAIVAIYGQTFPAMLDYPEVVVRLTLWCIVVGLYPTLLMTLIGVLWFPSRAISQMHQALNDRLDDAISHLTDSLAPLPETRIEREALALQKLNVFCLADDANWRTQNAWWQSCVATVTYIYSTLNRYDPTSFADSQAIIEFRQKLASEINKLQHAVAEGQCWQSDWRISESEAMAARECNLENICQTLLQLGQMDPNTPPTPAAKPPSMAADAFTNPDYMRYAVKTLLACLICYTFYSGVDWEGIHTCMLTCVIVANPNVGSSYQKMVLRFGGAFCGAILALLFTLLVMPWLDNIVELLFVLAPIFLLGAWIATSSERSSYIGTQMVVTFALATLENVFGPVYDLVEIRDRALGIIIGTVVSAVIYTFVWPESEARTLPQKLAGTLGMLSKVMRIPRQQEVTALRTYLQIRIGLHAAFNACEEMCQRVALERQLDSEERALLIERSQTVIRQGRDLLHAWDATWNSAQALDNALQPDRAGQFADALEKYAAGLATALSRSPQITLEETPASQAILPTLLKQEQHVCQLFARLPDWTAPALTPATEQAQGATQ.

Helical transmembrane passes span 43-63, 75-95, 100-120, 125-145, 158-178, 402-422, 426-446, 457-477, and 483-503; these read VILISMTFEIPFVALSLAVLF, FVAILFVVATVLEIGSLFLIY, GEPLIRLIIAGPILMGCMFLM, LGLVFFAVAIVAIYGQTFPAM, WCIVVGLYPTLLMTLIGVLWF, FGGAFCGAILALLFTLLVMPW, IVELLFVLAPIFLLGAWIATS, MVVTFALATLENVFGPVYDLV, and ALGIIIGTVVSAVIYTFVWPE.

Belongs to the MdtO family. Could be part of a tripartite efflux system composed of MdtN, MdtO and MdtP.

It is found in the cell inner membrane. In terms of biological role, could be involved in resistance to puromycin, acriflavine and tetraphenylarsonium chloride. The polypeptide is Multidrug resistance protein MdtO (mdtO) (Escherichia coli (strain K12)).